Reading from the N-terminus, the 473-residue chain is NAD-dependent protein deacetylase SRT1 (473 aa).

In terms of domain architecture, Deacetylase sirtuin-type spans 27–267 (SHLLQCKIEE…AGVMESLNMK (241 aa)). Residues 52 to 71 (GAGI…KGIW) and 114 to 117 (QNVD) each bind NAD(+). Catalysis depends on His-134, which acts as the Proton acceptor. Cys-142, Cys-145, Cys-167, and Cys-172 together coordinate Zn(2+). NAD(+)-binding positions include 209–211 (GTS), 235–237 (NLQ), and Val-253. The tract at residues 447-473 (LEGSGTSRKRSRTGKRKSKALAEETKA) is disordered. Positions 453 to 465 (SRKRSRTGKRKSK) are enriched in basic residues.

Belongs to the sirtuin family. Class IV subfamily. In terms of assembly, binds to the promoter region of genes influenced by ethylene. Interacts with ENAP1; this interaction is enhanced in the presence of ethylene. The cofactor is Zn(2+).

It localises to the nucleus. It carries out the reaction N(6)-acetyl-L-lysyl-[protein] + NAD(+) + H2O = 2''-O-acetyl-ADP-D-ribose + nicotinamide + L-lysyl-[protein]. Functionally, NAD-dependent protein deacetylase. Has deacetylase activity towards H3K9Ac. May have a function in the safeguard against genome instability and DNA damage to ensure plant cell growth. Involved in responses to ethylene leading to the transcriptional repression of some ethylene-responsive genes via the regulation of histone acetylation H3K9Ac. This chain is NAD-dependent protein deacetylase SRT1, found in Arabidopsis thaliana (Mouse-ear cress).